The sequence spans 448 residues: Phosphoglucosamine mutase (448 aa).

Ser102 acts as the Phosphoserine intermediate in catalysis. Mg(2+) is bound by residues Ser102, Asp243, Asp245, and Asp247. Residue Ser102 is modified to Phosphoserine.

It belongs to the phosphohexose mutase family. It depends on Mg(2+) as a cofactor. Post-translationally, activated by phosphorylation.

It catalyses the reaction alpha-D-glucosamine 1-phosphate = D-glucosamine 6-phosphate. Functionally, catalyzes the conversion of glucosamine-6-phosphate to glucosamine-1-phosphate. The chain is Phosphoglucosamine mutase from Parvibaculum lavamentivorans (strain DS-1 / DSM 13023 / NCIMB 13966).